The sequence spans 245 residues: Aliphatic sulfonates import ATP-binding protein SsuB 1 (245 aa).

The 219-residue stretch at 9–227 (LDLVGIGHRY…HRGDAQLAAW (219 aa)) folds into the ABC transporter domain. 41–48 (GPSGVGKS) serves as a coordination point for ATP.

It belongs to the ABC transporter superfamily. Aliphatic sulfonates importer (TC 3.A.1.17.2) family. In terms of assembly, the complex is composed of two ATP-binding proteins (SsuB), two transmembrane proteins (SsuC) and a solute-binding protein (SsuA).

Its subcellular location is the cell membrane. It carries out the reaction ATP + H2O + aliphatic sulfonate-[sulfonate-binding protein]Side 1 = ADP + phosphate + aliphatic sulfonateSide 2 + [sulfonate-binding protein]Side 1.. In terms of biological role, part of the ABC transporter complex SsuABC involved in aliphatic sulfonates import. Responsible for energy coupling to the transport system. This is Aliphatic sulfonates import ATP-binding protein SsuB 1 from Rhodococcus jostii (strain RHA1).